Reading from the N-terminus, the 256-residue chain is DNA repair protein RecO (256 aa).

It belongs to the RecO family.

Its function is as follows. Involved in DNA repair and RecF pathway recombination. The chain is DNA repair protein RecO from Pelotomaculum thermopropionicum (strain DSM 13744 / JCM 10971 / SI).